A 374-amino-acid chain; its full sequence is Tryptophan--tRNA ligase (374 aa).

Positions 71–79 match the 'HIGH' region motif; the sequence is PSGRMHLGH. The 'KMSKS' region motif lies at 247-251; sequence KMSSS.

Belongs to the class-I aminoacyl-tRNA synthetase family.

Its subcellular location is the cytoplasm. The enzyme catalyses tRNA(Trp) + L-tryptophan + ATP = L-tryptophyl-tRNA(Trp) + AMP + diphosphate + H(+). This is Tryptophan--tRNA ligase from Methanopyrus kandleri (strain AV19 / DSM 6324 / JCM 9639 / NBRC 100938).